The following is a 338-amino-acid chain: Holliday junction branch migration complex subunit RuvB (338 aa).

The segment at 1–181 (MEERILTQNF…FGVINRLDYY (181 aa)) is large ATPase domain (RuvB-L). ATP is bound by residues Leu-20, Arg-21, Gly-62, Lys-65, Thr-66, Thr-67, 128 to 130 (EDF), Arg-171, Tyr-181, and Arg-218. Position 66 (Thr-66) interacts with Mg(2+). Residues 182-252 (SVEELKEIIK…TANIALNMLG (71 aa)) form a small ATPAse domain (RuvB-S) region. Positions 255-338 (EMGLEEIDRK…YVEQRRIEDV (84 aa)) are head domain (RuvB-H). Residues Arg-310 and Arg-315 each contribute to the DNA site.

Belongs to the RuvB family. Homohexamer. Forms an RuvA(8)-RuvB(12)-Holliday junction (HJ) complex. HJ DNA is sandwiched between 2 RuvA tetramers; dsDNA enters through RuvA and exits via RuvB. An RuvB hexamer assembles on each DNA strand where it exits the tetramer. Each RuvB hexamer is contacted by two RuvA subunits (via domain III) on 2 adjacent RuvB subunits; this complex drives branch migration. In the full resolvosome a probable DNA-RuvA(4)-RuvB(12)-RuvC(2) complex forms which resolves the HJ.

The protein resides in the cytoplasm. The catalysed reaction is ATP + H2O = ADP + phosphate + H(+). Functionally, the RuvA-RuvB-RuvC complex processes Holliday junction (HJ) DNA during genetic recombination and DNA repair, while the RuvA-RuvB complex plays an important role in the rescue of blocked DNA replication forks via replication fork reversal (RFR). RuvA specifically binds to HJ cruciform DNA, conferring on it an open structure. The RuvB hexamer acts as an ATP-dependent pump, pulling dsDNA into and through the RuvAB complex. RuvB forms 2 homohexamers on either side of HJ DNA bound by 1 or 2 RuvA tetramers; 4 subunits per hexamer contact DNA at a time. Coordinated motions by a converter formed by DNA-disengaged RuvB subunits stimulates ATP hydrolysis and nucleotide exchange. Immobilization of the converter enables RuvB to convert the ATP-contained energy into a lever motion, pulling 2 nucleotides of DNA out of the RuvA tetramer per ATP hydrolyzed, thus driving DNA branch migration. The RuvB motors rotate together with the DNA substrate, which together with the progressing nucleotide cycle form the mechanistic basis for DNA recombination by continuous HJ branch migration. Branch migration allows RuvC to scan DNA until it finds its consensus sequence, where it cleaves and resolves cruciform DNA. The polypeptide is Holliday junction branch migration complex subunit RuvB (Caldanaerobacter subterraneus subsp. tengcongensis (strain DSM 15242 / JCM 11007 / NBRC 100824 / MB4) (Thermoanaerobacter tengcongensis)).